A 173-amino-acid polypeptide reads, in one-letter code: Translationally-controlled tumor protein homolog (173 aa).

The region spanning 1 to 173 (MIIYKDILTG…WKHGLEEYKV (173 aa)) is the TCTP domain.

This sequence belongs to the TCTP family.

The protein localises to the cytoplasm. It localises to the cytoskeleton. Involved in protein synthesis. Involved in microtubule stabilization. In Aspergillus oryzae (strain ATCC 42149 / RIB 40) (Yellow koji mold), this protein is Translationally-controlled tumor protein homolog.